A 220-amino-acid chain; its full sequence is Ribose-5-phosphate isomerase A (220 aa).

Substrate-binding positions include T28–T31, D81–D84, and K94–G97. E103 acts as the Proton acceptor in catalysis. Residue K121 coordinates substrate.

It belongs to the ribose 5-phosphate isomerase family. Homodimer.

It catalyses the reaction aldehydo-D-ribose 5-phosphate = D-ribulose 5-phosphate. It functions in the pathway carbohydrate degradation; pentose phosphate pathway; D-ribose 5-phosphate from D-ribulose 5-phosphate (non-oxidative stage): step 1/1. In terms of biological role, catalyzes the reversible conversion of ribose-5-phosphate to ribulose 5-phosphate. The protein is Ribose-5-phosphate isomerase A of Yersinia enterocolitica serotype O:8 / biotype 1B (strain NCTC 13174 / 8081).